Consider the following 115-residue polypeptide: Translation initiation factor 1A 2 (115 aa).

The tract at residues 1–34 (MANYRSTIRHRNSGSRKSVSGDTHEVTRVRTPQK) is disordered. Residues 22 to 34 (DTHEVTRVRTPQK) show a composition bias toward basic and acidic residues. The S1-like domain occupies 27–101 (TRVRTPQKDR…SKADVTWKYT (75 aa)).

This sequence belongs to the eIF-1A family.

Its function is as follows. Seems to be required for maximal rate of protein biosynthesis. Enhances ribosome dissociation into subunits and stabilizes the binding of the initiator Met-tRNA(I) to 40 S ribosomal subunits. The sequence is that of Translation initiation factor 1A 2 from Methanosarcina barkeri (strain Fusaro / DSM 804).